A 314-amino-acid chain; its full sequence is Acetyl-coenzyme A carboxylase carboxyl transferase subunit beta (314 aa).

The region spanning 44–311 (LMNKCPHCGT…VETWQASSPL (268 aa)) is the CoA carboxyltransferase N-terminal domain. Zn(2+) contacts are provided by Cys-48, Cys-51, Cys-67, and Cys-70. The C4-type zinc finger occupies 48–70 (CPHCGTIHYSKDLEKNLRVCKGC).

It belongs to the AccD/PCCB family. Acetyl-CoA carboxylase is a heterohexamer composed of biotin carboxyl carrier protein (AccB), biotin carboxylase (AccC) and two subunits each of ACCase subunit alpha (AccA) and ACCase subunit beta (AccD). Zn(2+) is required as a cofactor.

The protein resides in the cytoplasm. It carries out the reaction N(6)-carboxybiotinyl-L-lysyl-[protein] + acetyl-CoA = N(6)-biotinyl-L-lysyl-[protein] + malonyl-CoA. It functions in the pathway lipid metabolism; malonyl-CoA biosynthesis; malonyl-CoA from acetyl-CoA: step 1/1. Its function is as follows. Component of the acetyl coenzyme A carboxylase (ACC) complex. Biotin carboxylase (BC) catalyzes the carboxylation of biotin on its carrier protein (BCCP) and then the CO(2) group is transferred by the transcarboxylase to acetyl-CoA to form malonyl-CoA. The chain is Acetyl-coenzyme A carboxylase carboxyl transferase subunit beta from Brevibacillus brevis (strain 47 / JCM 6285 / NBRC 100599).